The primary structure comprises 751 residues: Dual specificity tyrosine-phosphorylation-regulated kinase 1A (751 aa).

The segment covering 59–68 has biased composition (polar residues); the sequence is YNDQIQQPLP. Disordered regions lie at residues 59 to 81 and 104 to 129; these read YNDQ…RDPA and YAKK…KVYN. Residues 109 to 126 carry the Bipartite nuclear localization signal motif; sequence RRHQQGQGDDSSHKKERK. Residues 151 to 471 enclose the Protein kinase domain; it reads YEIDSLIGKG…PYYALQHSFF (321 aa). Residues 157-165, lysine 180, and 230-233 contribute to the ATP site; these read IGKGSFGQV and FEML. Aspartate 279 serves as the catalytic Proton acceptor. Polar residues predominate over residues 477 to 493; the sequence is EGTNTSNSVSTSPAMEQ. Disordered stretches follow at residues 477-532, 580-667, and 730-751; these read EGTN…HSGG, HVPS…GNQA, and GMDR…VASS. A compositionally biased stretch (low complexity) spans 494–517; sequence SQSSGTTSSTSSSSGGSSGTSNSG. The interval 585 to 613 is histidine-rich domain (HRD); that stretch reads QQNVPHHHGNGSHHHHHHHHHHHGQHVLS. The segment covering 589-609 has biased composition (basic residues); that stretch reads PHHHGNGSHHHHHHHHHHHGQ. The segment covering 611-622 has biased composition (polar residues); that stretch reads VLSNRTRTRIYN. 2 stretches are compositionally biased toward low complexity: residues 623 to 633 and 642 to 660; these read SPSTSSSTQDS and SMTS…SSST. The span at 742–751 shows a compositional bias: polar residues; sequence CVQQSPVASS.

It belongs to the protein kinase superfamily. CMGC Ser/Thr protein kinase family. MNB/DYRK subfamily. Autophosphorylated on tyrosine residues.

Its subcellular location is the nucleus. It localises to the nucleus speckle. It catalyses the reaction L-seryl-[protein] + ATP = O-phospho-L-seryl-[protein] + ADP + H(+). The enzyme catalyses L-threonyl-[protein] + ATP = O-phospho-L-threonyl-[protein] + ADP + H(+). It carries out the reaction L-tyrosyl-[protein] + ATP = O-phospho-L-tyrosyl-[protein] + ADP + H(+). The catalysed reaction is [DNA-directed RNA polymerase] + ATP = phospho-[DNA-directed RNA polymerase] + ADP + H(+). Dual-specificity kinase which possesses both serine/threonine and tyrosine kinase activities. Exhibits a substrate preference for proline at position P+1 and arginine at position P-3. Plays an important role in double-strand breaks (DSBs) repair following DNA damage. Mechanistically, phosphorylates RNF169 and increases its ability to block accumulation of TP53BP1 at the DSB sites thereby promoting homologous recombination repair (HRR). Also acts as a positive regulator of transcription by acting as a CTD kinase that mediates phosphorylation of the CTD (C-terminal domain) of the large subunit of RNA polymerase II (RNAP II) POLR2A. Modulates alternative splicing by phosphorylating the splice factor SRSF6. Phosphorylates SEPTIN4, SEPTIN5 and SF3B1. The chain is Dual specificity tyrosine-phosphorylation-regulated kinase 1A from Xenopus tropicalis (Western clawed frog).